Consider the following 336-residue polypeptide: N-acetyl-gamma-glutamyl-phosphate reductase (336 aa).

C143 is a catalytic residue.

It belongs to the NAGSA dehydrogenase family. Type 1 subfamily.

The protein localises to the cytoplasm. The catalysed reaction is N-acetyl-L-glutamate 5-semialdehyde + phosphate + NADP(+) = N-acetyl-L-glutamyl 5-phosphate + NADPH + H(+). Its pathway is amino-acid biosynthesis; L-arginine biosynthesis; N(2)-acetyl-L-ornithine from L-glutamate: step 3/4. Its function is as follows. Catalyzes the NADPH-dependent reduction of N-acetyl-5-glutamyl phosphate to yield N-acetyl-L-glutamate 5-semialdehyde. The protein is N-acetyl-gamma-glutamyl-phosphate reductase of Dictyoglomus thermophilum (strain ATCC 35947 / DSM 3960 / H-6-12).